The sequence spans 416 residues: MFSKSVTLAQYDPDLAAAIAQEDQRQQDHVELIASENYVSCAVMEAQGSQLTNKYAEGYPGKRYYGGCEYVDIVEQLAIDRVKKLFGAQYANVQPHSGSQANQAVYASVLKPGDTILGMSLAHGGHLTHGASVNISGKLYNAVTYGLDENEVLDYAEVERLALEHKPKMIVAGASAYALQIDWAKFREIADKVGAYLFVDMAHYAGLIAGGEYPNPVPFCDFVTTTTHKTLRGPRGGVILCRDNTHEKALNSSIFPSLQGGPLMHVIAAKAVAFKEALQPEFKQYAKQVKINAAAMAEELVKRGLRIVSGRTESHVFLVDLQPMKITGKAAEAALGKAHITVNKNAIPNDPEKPFVTSGIRIGSAAMTTRGFNEADARVLANLVADVLSNPEDEANLENVRKQITALCDKYPVYGA.

(6S)-5,6,7,8-tetrahydrofolate-binding positions include leucine 121 and 125–127 (GHL). N6-(pyridoxal phosphate)lysine is present on lysine 229.

Belongs to the SHMT family. In terms of assembly, homodimer. Pyridoxal 5'-phosphate is required as a cofactor.

It is found in the cytoplasm. The enzyme catalyses (6R)-5,10-methylene-5,6,7,8-tetrahydrofolate + glycine + H2O = (6S)-5,6,7,8-tetrahydrofolate + L-serine. It functions in the pathway one-carbon metabolism; tetrahydrofolate interconversion. Its pathway is amino-acid biosynthesis; glycine biosynthesis; glycine from L-serine: step 1/1. Functionally, catalyzes the reversible interconversion of serine and glycine with tetrahydrofolate (THF) serving as the one-carbon carrier. This reaction serves as the major source of one-carbon groups required for the biosynthesis of purines, thymidylate, methionine, and other important biomolecules. Also exhibits THF-independent aldolase activity toward beta-hydroxyamino acids, producing glycine and aldehydes, via a retro-aldol mechanism. The polypeptide is Serine hydroxymethyltransferase (Neisseria meningitidis serogroup C / serotype 2a (strain ATCC 700532 / DSM 15464 / FAM18)).